Here is a 437-residue protein sequence, read N- to C-terminus: Serine carboxypeptidase-like 10 (437 aa).

A signal peptide spans 1–21 (MGSTLKHLLLLLLVLIRHVDS). Cystine bridges form between C80–C327, C243–C257, and C281–C293. The N-linked (GlcNAc...) asparagine glycan is linked to N101. S175 is an active-site residue. N-linked (GlcNAc...) asparagine glycosylation is present at N328. The active site involves D362. N378 carries an N-linked (GlcNAc...) asparagine glycan. Residue H415 is part of the active site. N422 carries an N-linked (GlcNAc...) asparagine glycan.

Belongs to the peptidase S10 family. As to expression, expressed in senescent leaves.

Its subcellular location is the secreted. Its function is as follows. Involved in the biosynthesis of sinapoylated anthocyanins. This Arabidopsis thaliana (Mouse-ear cress) protein is Serine carboxypeptidase-like 10 (SCPL10).